The primary structure comprises 645 residues: Threonine--tRNA ligase (645 aa).

Positions 1–63 (MEQINIQFPD…ETDGSIEIVT (63 aa)) constitute a TGS domain. The tract at residues 242–540 (DHRKIGKELE…LTEETKGAFP (299 aa)) is catalytic. Zn(2+)-binding residues include Cys-336, His-387, and His-517.

Belongs to the class-II aminoacyl-tRNA synthetase family. Homodimer. Zn(2+) serves as cofactor.

The protein localises to the cytoplasm. It carries out the reaction tRNA(Thr) + L-threonine + ATP = L-threonyl-tRNA(Thr) + AMP + diphosphate + H(+). Catalyzes the attachment of threonine to tRNA(Thr) in a two-step reaction: L-threonine is first activated by ATP to form Thr-AMP and then transferred to the acceptor end of tRNA(Thr). Also edits incorrectly charged L-seryl-tRNA(Thr). The chain is Threonine--tRNA ligase from Staphylococcus aureus (strain NCTC 8325 / PS 47).